The sequence spans 590 residues: Aspartate--tRNA ligase (590 aa).

Residue Glu175 participates in L-aspartate binding. Positions 199–202 are aspartate; the sequence is QIFK. An L-aspartate-binding site is contributed by Arg221. ATP is bound by residues 221–223 and Gln230; that span reads RDE. His449 is a binding site for L-aspartate. Residue Glu483 coordinates ATP. Position 490 (Arg490) interacts with L-aspartate. 535-538 is a binding site for ATP; the sequence is GLDR.

This sequence belongs to the class-II aminoacyl-tRNA synthetase family. Type 1 subfamily. Homodimer.

Its subcellular location is the cytoplasm. It carries out the reaction tRNA(Asp) + L-aspartate + ATP = L-aspartyl-tRNA(Asp) + AMP + diphosphate. Catalyzes the attachment of L-aspartate to tRNA(Asp) in a two-step reaction: L-aspartate is first activated by ATP to form Asp-AMP and then transferred to the acceptor end of tRNA(Asp). The sequence is that of Aspartate--tRNA ligase from Geobacillus kaustophilus (strain HTA426).